The chain runs to 229 residues: Flagellar L-ring protein (229 aa).

An N-terminal signal peptide occupies residues 1–25 (MKQVRLLPSAPVRAVCALAVAALAG). Cysteine 26 carries the N-palmitoyl cysteine lipid modification. Cysteine 26 is lipidated: S-diacylglycerol cysteine.

Belongs to the FlgH family. As to quaternary structure, the basal body constitutes a major portion of the flagellar organelle and consists of four rings (L,P,S, and M) mounted on a central rod.

Its subcellular location is the cell outer membrane. The protein localises to the bacterial flagellum basal body. Assembles around the rod to form the L-ring and probably protects the motor/basal body from shearing forces during rotation. This is Flagellar L-ring protein from Burkholderia ambifaria (strain MC40-6).